The sequence spans 378 residues: Chaperone protein DnaJ (378 aa).

The J domain maps to 5–70; sequence DFYEVLGLSK…QKRAAYDQYG (66 aa). A CR-type zinc finger spans residues 133-211; the sequence is GITKEIRIPT…CHGDGRVERY (79 aa). Residues Cys-146, Cys-149, Cys-163, Cys-166, Cys-185, Cys-188, Cys-199, and Cys-202 each coordinate Zn(2+). CXXCXGXG motif repeat units follow at residues 146-153, 163-170, 185-192, and 199-206; these read CDKCHGSG, CSTCHGAG, CPTCHGRG, and CSKCHGDG.

Belongs to the DnaJ family. Homodimer. Zn(2+) serves as cofactor.

The protein localises to the cytoplasm. Functionally, participates actively in the response to hyperosmotic and heat shock by preventing the aggregation of stress-denatured proteins and by disaggregating proteins, also in an autonomous, DnaK-independent fashion. Unfolded proteins bind initially to DnaJ; upon interaction with the DnaJ-bound protein, DnaK hydrolyzes its bound ATP, resulting in the formation of a stable complex. GrpE releases ADP from DnaK; ATP binding to DnaK triggers the release of the substrate protein, thus completing the reaction cycle. Several rounds of ATP-dependent interactions between DnaJ, DnaK and GrpE are required for fully efficient folding. Also involved, together with DnaK and GrpE, in the DNA replication of plasmids through activation of initiation proteins. This chain is Chaperone protein DnaJ, found in Proteus mirabilis (strain HI4320).